The sequence spans 148 residues: 3-hydroxyacyl-[acyl-carrier-protein] dehydratase FabZ (148 aa).

Residue H50 is part of the active site.

The protein belongs to the thioester dehydratase family. FabZ subfamily.

Its subcellular location is the cytoplasm. It carries out the reaction a (3R)-hydroxyacyl-[ACP] = a (2E)-enoyl-[ACP] + H2O. Its function is as follows. Involved in unsaturated fatty acids biosynthesis. Catalyzes the dehydration of short chain beta-hydroxyacyl-ACPs and long chain saturated and unsaturated beta-hydroxyacyl-ACPs. The sequence is that of 3-hydroxyacyl-[acyl-carrier-protein] dehydratase FabZ from Lactobacillus helveticus (strain DPC 4571).